The sequence spans 674 residues: Xaa-Pro aminopeptidase 2 (674 aa).

An N-terminal signal peptide occupies residues 1-21 (MARAHWGCCPWLVLLCACAWG). Residues Asn35, Asn49, and Asn65 are each glycosylated (N-linked (GlcNAc...) asparagine). Arg116 provides a ligand contact to substrate. N-linked (GlcNAc...) asparagine glycans are attached at residues Asn278 and Asn291. His430 contributes to the substrate binding site. Positions 450, 461, and 524 each coordinate Zn(2+). Residues His524, His533, and Glu555 each coordinate substrate. Positions 555 and 569 each coordinate Zn(2+). Ala649 is lipidated: GPI-anchor amidated alanine. Positions 650-674 (ARAPDTASWASVLVVSTLAILGWSV) are cleaved as a propeptide — removed in mature form.

It belongs to the peptidase M24B family. Homotrimer. Requires Zn(2+) as cofactor. Post-translationally, N-glycosylated. As to expression, expressed in kidney, lung, heart, placenta, liver, small intestine and colon. No expression in brain, skeletal muscle, pancreas, spleen, thymus, prostate, testis and ovary.

Its subcellular location is the cell membrane. It carries out the reaction Release of any N-terminal amino acid, including proline, that is linked to proline, even from a dipeptide or tripeptide.. Its activity is regulated as follows. Inhibited by apstatin and the chelating agent 1,10-phenanthroline. Also inhibited by high concentrations of Zn(2+). Not significantly inhibited by bestatin or phosphoramidon. Its function is as follows. Membrane-bound metalloprotease which catalyzes the removal of a penultimate prolyl residue from the N-termini of peptides, such as Arg-Pro-Pro. May play a role in the metabolism of the vasodilator bradykinin. In Homo sapiens (Human), this protein is Xaa-Pro aminopeptidase 2 (XPNPEP2).